Here is a 760-residue protein sequence, read N- to C-terminus: Serine/threonine-protein kinase PknG (760 aa).

The tract at residues 1–31 (MTSPENPDLPDADDAYVDSGPGTQPASLEDL) is disordered. The Protein kinase domain occupies 161 to 403 (YEIKGCIAHG…SAEEMSSQLL (243 aa)). Residues 167 to 175 (IAHGGLGWV) and Lys-191 contribute to the ATP site. Residue Asp-286 is the Proton acceptor of the active site.

This sequence belongs to the protein kinase superfamily. Ser/Thr protein kinase family. As to quaternary structure, interacts with GarA in vitro.

It carries out the reaction L-seryl-[protein] + ATP = O-phospho-L-seryl-[protein] + ADP + H(+). The enzyme catalyses L-threonyl-[protein] + ATP = O-phospho-L-threonyl-[protein] + ADP + H(+). In Mycolicibacterium smegmatis (strain ATCC 700084 / mc(2)155) (Mycobacterium smegmatis), this protein is Serine/threonine-protein kinase PknG (pknG).